The following is a 428-amino-acid chain: 3-phosphoshikimate 1-carboxyvinyltransferase (428 aa).

3-phosphoshikimate is bound by residues Lys22, Ser23, and Arg27. Lys22 serves as a coordination point for phosphoenolpyruvate. Positions 96 and 124 each coordinate phosphoenolpyruvate. Positions 169, 170, 171, 197, 313, 336, and 340 each coordinate 3-phosphoshikimate. A phosphoenolpyruvate-binding site is contributed by Gln171. Catalysis depends on Asp313, which acts as the Proton acceptor. The phosphoenolpyruvate site is built by Arg344, Arg386, and Lys411.

The protein belongs to the EPSP synthase family. As to quaternary structure, monomer.

Its subcellular location is the cytoplasm. The enzyme catalyses 3-phosphoshikimate + phosphoenolpyruvate = 5-O-(1-carboxyvinyl)-3-phosphoshikimate + phosphate. The protein operates within metabolic intermediate biosynthesis; chorismate biosynthesis; chorismate from D-erythrose 4-phosphate and phosphoenolpyruvate: step 6/7. Catalyzes the transfer of the enolpyruvyl moiety of phosphoenolpyruvate (PEP) to the 5-hydroxyl of shikimate-3-phosphate (S3P) to produce enolpyruvyl shikimate-3-phosphate and inorganic phosphate. This is 3-phosphoshikimate 1-carboxyvinyltransferase from Proteus mirabilis (strain HI4320).